The primary structure comprises 198 residues: Cyclin-dependent kinase inhibitor 1B (198 aa).

The segment covering 1–11 has biased composition (polar residues); it reads MSNVRVSNGSP. Positions 1–34 are disordered; that stretch reads MSNVRVSNGSPSLERMDARQAEHPKPSACRNLFG. S10 carries the phosphoserine; by UHMK1 modification. Residues 14 to 25 show a composition bias toward basic and acidic residues; it reads ERMDARQAEHPK. Residues 51–91 are interaction with CDK2; the sequence is DMEEASQRKWNFDFQNHKPLEGKYEWQEVEKGSLPEFYYRP. Y74 is subject to Phosphotyrosine; by SRC. The disordered stretch occupies residues 85-198; it reads PEFYYRPPRP…KKPGLRRRQT (114 aa). At Y88 the chain carries Phosphotyrosine; by ABL, LYN, SRC and JAK2. Phosphotyrosine is present on Y89. Positions 126-137 are enriched in basic and acidic residues; the sequence is EDTHLVDPKTDP. Positions 153–169 match the Nuclear localization signal motif; sequence KRPATDDSSTQNKRANR. The residue at position 157 (T157) is a Phosphothreonine; by CaMK1, PKB/AKT1 and PIM1. A Phosphothreonine modification is found at T170. Positions 175–186 are enriched in polar residues; sequence SDGSPNAGSVEQ. T187 is modified (phosphothreonine; by PKB/AKT1, CDK1 and CDK2). Position 198 is a phosphothreonine; by CaMK1, PKB/AKT1, RPS6KA1, RPS6KA3 and PIM1 (T198).

It belongs to the CDI family. Forms a ternary complex composed of CCNE1, CDK2 and CDKN1B. Interacts directly with CCNE1; the interaction is inhibited by CDK2-dependent phosphorylation on Thr-187. Interacts with COPS5, subunit of the COP9 signalosome complex; the interaction leads to CDKN1B degradation. Interacts with NUP50; the interaction leads to nuclear import and degradation of phosphorylated CDKN1B. Interacts with CCND1 and SNX6. Interacts (Thr-198-phosphorylated form) with 14-3-3 proteins, binds strongly YWHAQ, weakly YWHAE and YWHAH, but not YWHAB nor YWHAZ; the interaction with YWHAQ results in translocation to the cytoplasm. Interacts with AKT1 and LYN; the interactions lead to cytoplasmic mislocation, phosphorylation of CDKN1B and inhibition of cell cycle arrest. Forms a ternary complex with CCNA2 and CDK2; CDKN1B inhibits the kinase activity of CDK2 through conformational rearrangements. Interacts (unphosphorylated form) with CDK2. Forms a complex with CDK2 and SPDYA, but does not directly interact with SPDYA. Forms a ternary complex composed of cyclin D, CDK4 and CDKN1B. Interacts (phosphorylated on Tyr-88 and Tyr-89) with CDK4; the interaction is required for cyclin D and CDK4 complex assembly, induces nuclear translocation and activates the CDK4 kinase activity. Interacts with GRB2. Interacts with PIM1. Identified in a complex with SKP1, SKP2 and CKS1B. Interacts with UHMK1; the interaction leads to cytoplasmic mislocation, phosphorylation of CDKN1B and inhibition of cell cycle arrest. Also interacts with CDK1. Dephosphorylated on Thr-187 by PPM1H, leading to CDKN1B stability. Interacts with HSPA8; the interaction may be associated with susceptibility to ubiquitination. Phosphorylated; phosphorylation occurs on serine, threonine and tyrosine residues. Phosphorylation on Ser-10 is the major site of phosphorylation in resting cells, takes place at the G(0)-G(1) phase and leads to protein stability. Phosphorylation on other sites is greatly enhanced by mitogens, growth factors, cMYC and in certain cancer cell lines. The phosphorylated form found in the cytoplasm is inactivate. Phosphorylation on Thr-198 is required for interaction with 14-3-3 proteins. Phosphorylation on Thr-187, by CDK1 and CDK2 leads to protein ubiquitination and proteasomal degradation. Tyrosine phosphorylation promotes this process. Phosphorylation by PKB/AKT1 can be suppressed by LY294002, an inhibitor of the catalytic subunit of PI3K. Phosphorylation on Tyr-88 and Tyr-89 has no effect on binding CDK2, but is required for binding CDK4. Dephosphorylated on tyrosine residues by G-CSF. Post-translationally, ubiquitinated; in the cytoplasm by the KPC complex (composed of RNF123/KPC1 and UBAC1/KPC2) and, in the nucleus, by SCF(SKP2). The latter requires prior phosphorylation on Thr-187. Ubiquitinated; by a TRIM21-containing SCF(SKP2)-like complex; leads to its degradation. In terms of processing, subject to degradation in the lysosome. Interaction with SNX6 promotes lysosomal degradation. In terms of tissue distribution, expressed in kidney (at protein level). Expressed in all tissues tested. Highest levels in skeletal muscle, lowest in liver and kidney.

It is found in the nucleus. Its subcellular location is the cytoplasm. The protein localises to the endosome. In terms of biological role, important regulator of cell cycle progression. Inhibits the kinase activity of CDK2 bound to cyclin A, but has little inhibitory activity on CDK2 bound to SPDYA. Involved in G1 arrest. Potent inhibitor of cyclin E- and cyclin A-CDK2 complexes. Forms a complex with cyclin type D-CDK4 complexes and is involved in the assembly, stability, and modulation of CCND1-CDK4 complex activation. Acts either as an inhibitor or an activator of cyclin type D-CDK4 complexes depending on its phosphorylation state and/or stoichometry. The polypeptide is Cyclin-dependent kinase inhibitor 1B (Homo sapiens (Human)).